Here is a 268-residue protein sequence, read N- to C-terminus: Tryptophan synthase alpha chain (268 aa).

Residues E49 and D60 each act as proton acceptor in the active site.

Belongs to the TrpA family. In terms of assembly, tetramer of two alpha and two beta chains.

It carries out the reaction (1S,2R)-1-C-(indol-3-yl)glycerol 3-phosphate + L-serine = D-glyceraldehyde 3-phosphate + L-tryptophan + H2O. The protein operates within amino-acid biosynthesis; L-tryptophan biosynthesis; L-tryptophan from chorismate: step 5/5. The alpha subunit is responsible for the aldol cleavage of indoleglycerol phosphate to indole and glyceraldehyde 3-phosphate. The protein is Tryptophan synthase alpha chain of Haemophilus influenzae (strain ATCC 51907 / DSM 11121 / KW20 / Rd).